Here is a 356-residue protein sequence, read N- to C-terminus: Glucan endo-1,3-beta-glucosidase, acidic isoform GL153 (356 aa).

An N-terminal signal peptide occupies residues 1 to 29 (MALCIKNGFLAAALVLVGLLMCSIQMIGA). The residue at position 30 (Q30) is a Pyrrolidone carboxylic acid. Residue N95 is glycosylated (N-linked (GlcNAc...) asparagine). E124 serves as the catalytic Proton donor. The active-site Nucleophile is E264.

This sequence belongs to the glycosyl hydrolase 17 family. Is expressed primarily in epidermal cell of healthy plant, and following induction by ethylene, accumulates in mesophyll cells.

It localises to the secreted. The protein resides in the extracellular space. It catalyses the reaction Hydrolysis of (1-&gt;3)-beta-D-glucosidic linkages in (1-&gt;3)-beta-D-glucans.. Its function is as follows. Is thought to be an important plant defense-related product against fungal pathogens. The protein is Glucan endo-1,3-beta-glucosidase, acidic isoform GL153 (GGL4) of Nicotiana tabacum (Common tobacco).